The following is a 478-amino-acid chain: Kynurenine 3-monooxygenase (478 aa).

FAD-binding positions include Val-19, 37 to 40 (YEAR), and Ala-57. Residues Arg-85 and Tyr-99 each coordinate L-kynurenine. FAD-binding positions include Arg-111, Leu-136, Thr-172, Asp-304, and 317-318 (MN). L-kynurenine is bound by residues Asn-363 and Tyr-398. 2 consecutive transmembrane segments (helical) span residues 385–404 (FLHA…VAFT) and 425–445 (GLFV…VHHL).

The protein belongs to the aromatic-ring hydroxylase family. KMO subfamily. FAD serves as cofactor. Highest activity in liver and kidney. Low activity in spleen, stomach, intestinal tract, esophagus, heart and lung.

The protein localises to the mitochondrion outer membrane. It catalyses the reaction L-kynurenine + NADPH + O2 + H(+) = 3-hydroxy-L-kynurenine + NADP(+) + H2O. Its pathway is cofactor biosynthesis; NAD(+) biosynthesis; quinolinate from L-kynurenine: step 1/3. Its function is as follows. Catalyzes the hydroxylation of L-kynurenine (L-Kyn) to form 3-hydroxy-L-kynurenine (L-3OHKyn). Required for synthesis of quinolinic acid, a neurotoxic NMDA receptor antagonist and potential endogenous inhibitor of NMDA receptor signaling in axonal targeting, synaptogenesis and apoptosis during brain development. Quinolinic acid may also affect NMDA receptor signaling in pancreatic beta cells, osteoblasts, myocardial cells, and the gastrointestinal tract. This chain is Kynurenine 3-monooxygenase, found in Rattus norvegicus (Rat).